The primary structure comprises 509 residues: Angiopoietin-4 (509 aa).

The first 21 residues, 1–21 (MLCQPAMLLDGLLLLATMAAA), serve as a signal peptide directing secretion. Asn-105, Asn-135, Asn-149, Asn-167, Asn-256, Asn-306, Asn-317, and Asn-417 each carry an N-linked (GlcNAc...) asparagine glycan. Residues 181-269 (LSTNKLERQM…LQQQQQQLTE (89 aa)) are a coiled coil. In terms of domain architecture, Fibrinogen C-terminal spans 288 to 508 (KTPKPVFQDC…GTRMMLRPMG (221 aa)). An intrachain disulfide couples Cys-297 to Cys-326. A disordered region spans residues 416–436 (VNDSSSSAGRKNSLAPQGTKF). A disulfide bond links Cys-450 and Cys-463.

In terms of assembly, homodimer; disulfide-linked. Interacts with TEK/TIE2. Widely expressed.

The protein resides in the secreted. Its function is as follows. Binds to TEK/TIE2, modulating ANGPT1 signaling. Can induce tyrosine phosphorylation of TEK/TIE2. Promotes endothelial cell survival, migration and angiogenesis. The polypeptide is Angiopoietin-4 (Angpt4) (Mus musculus (Mouse)).